The chain runs to 233 residues: tRNA (guanine-N(7)-)-methyltransferase (233 aa).

The interval 1–22 is disordered; that stretch reads MIDENHPMRAAGNFFGRRHGKP. Residues Glu64, Glu89, Asp116, and Asp138 each contribute to the S-adenosyl-L-methionine site. Residue Asp138 is part of the active site. Substrate contacts are provided by residues Lys142, Asp174, and 212–215; that span reads TRYE.

Belongs to the class I-like SAM-binding methyltransferase superfamily. TrmB family.

The catalysed reaction is guanosine(46) in tRNA + S-adenosyl-L-methionine = N(7)-methylguanosine(46) in tRNA + S-adenosyl-L-homocysteine. Its pathway is tRNA modification; N(7)-methylguanine-tRNA biosynthesis. Functionally, catalyzes the formation of N(7)-methylguanine at position 46 (m7G46) in tRNA. The polypeptide is tRNA (guanine-N(7)-)-methyltransferase (Brucella melitensis biotype 1 (strain ATCC 23456 / CCUG 17765 / NCTC 10094 / 16M)).